Here is a 437-residue protein sequence, read N- to C-terminus: Elongation factor Tu, mitochondrial (437 aa).

Residues 1 to 38 (MSALLPRLLTRTAFKASGKLLRLSSVISRTFSQTTTSY) constitute a mitochondrion transit peptide. A tr-type G domain is found at 46–242 (KPHVNIGTIG…AVDEYIPTPE (197 aa)). Positions 55 to 62 (GHVDHGKT) are G1. 55–62 (GHVDHGKT) is a GTP binding site. Residues 96–100 (GITIS) form a G2 region. The segment at 117-120 (DCPG) is G3. GTP-binding positions include 117 to 121 (DCPGH) and 172 to 175 (NKVD). Residues 172–175 (NKVD) form a G4 region. Residues 210–212 (SAL) form a G5 region.

The protein belongs to the TRAFAC class translation factor GTPase superfamily. Classic translation factor GTPase family. EF-Tu/EF-1A subfamily. Post-translationally, the precursor is processed in two steps involving mitochondrial intermediate peptidase (MIP) and mitochondrial processing peptidase (MPP).

The protein resides in the mitochondrion. The protein operates within protein biosynthesis; polypeptide chain elongation. Functionally, G-protein that, in its active GTP-bound form, binds to and delivers aminoacyl-tRNA to the A-site of ribosomes during protein biosynthesis. In the presence of a correct codon-anticodon match between the aminoacyl-tRNA and the A-site codon of the ribosome-bound mRNA, the ribosome acts as a GTPase activator and the GTP is hydrolyzed. The inactive GDP-bound form leaves the ribosome and must be recycled before binding another molecule of aminoacyl-tRNA. Required for mitochondrial protein biosynthesis and maintenance of mitochondrial DNA. The chain is Elongation factor Tu, mitochondrial (TUF1) from Saccharomyces cerevisiae (strain ATCC 204508 / S288c) (Baker's yeast).